A 420-amino-acid polypeptide reads, in one-letter code: Pectate lyase (420 aa).

A signal peptide spans 1–21 (MKKVMLATALFLGLTPAGANA). The disordered stretch occupies residues 117 to 139 (TWGKKEPSGTQEEARARSQKNQK). Over residues 119–132 (GKKEPSGTQEEARA) the composition is skewed to basic and acidic residues. 3 residues coordinate Ca(2+): aspartate 205, aspartate 244, and aspartate 248. Arginine 300 is an active-site residue.

This sequence belongs to the polysaccharide lyase 1 family. Monomer. Ca(2+) is required as a cofactor.

It localises to the secreted. It carries out the reaction Eliminative cleavage of (1-&gt;4)-alpha-D-galacturonan to give oligosaccharides with 4-deoxy-alpha-D-galact-4-enuronosyl groups at their non-reducing ends.. It functions in the pathway glycan metabolism; pectin degradation; 2-dehydro-3-deoxy-D-gluconate from pectin: step 2/5. Its function is as follows. Produces unsaturated products from polygalacturonate. This Bacillus subtilis (strain 168) protein is Pectate lyase (pel).